Reading from the N-terminus, the 286-residue chain is Bifunctional protein FolD (286 aa).

NADP(+) contacts are provided by residues G165–S167 and S190.

This sequence belongs to the tetrahydrofolate dehydrogenase/cyclohydrolase family. As to quaternary structure, homodimer.

The enzyme catalyses (6R)-5,10-methylene-5,6,7,8-tetrahydrofolate + NADP(+) = (6R)-5,10-methenyltetrahydrofolate + NADPH. The catalysed reaction is (6R)-5,10-methenyltetrahydrofolate + H2O = (6R)-10-formyltetrahydrofolate + H(+). It functions in the pathway one-carbon metabolism; tetrahydrofolate interconversion. Catalyzes the oxidation of 5,10-methylenetetrahydrofolate to 5,10-methenyltetrahydrofolate and then the hydrolysis of 5,10-methenyltetrahydrofolate to 10-formyltetrahydrofolate. This Staphylococcus aureus (strain USA300) protein is Bifunctional protein FolD.